The sequence spans 428 residues: GTPase Obg (428 aa).

The region spanning 1–158 is the Obg domain; sequence MFVDQVKIYV…RDVILELKVL (158 aa). The OBG-type G domain maps to 159–329; it reads ADVGLVGFPS…LLFEVANLLE (171 aa). GTP-binding positions include 165 to 172, 190 to 194, 212 to 215, 282 to 285, and 310 to 312; these read GFPSVGKS, FTTIV, DLPG, NKMD, and SAV. Ser172 and Thr192 together coordinate Mg(2+). The OCT domain maps to 350 to 428; it reads KLETEGVKFD…ILEYEFEFID (79 aa).

The protein belongs to the TRAFAC class OBG-HflX-like GTPase superfamily. OBG GTPase family. In terms of assembly, monomer. The cofactor is Mg(2+).

The protein resides in the cytoplasm. In terms of biological role, an essential GTPase which binds GTP, GDP and possibly (p)ppGpp with moderate affinity, with high nucleotide exchange rates and a fairly low GTP hydrolysis rate. Plays a role in control of the cell cycle, stress response, ribosome biogenesis and in those bacteria that undergo differentiation, in morphogenesis control. The polypeptide is GTPase Obg (Bacillus cereus (strain Q1)).